The following is a 349-amino-acid chain: Isopentenyl-diphosphate delta-isomerase (349 aa).

6-7 (RK) lines the substrate pocket. Residues 62–64 (AMT), S93, and N122 contribute to the FMN site. Residue Q152 coordinates substrate. E153 provides a ligand contact to Mg(2+). FMN is bound by residues K184, T214, 258 to 259 (GG), and 280 to 281 (AG).

Belongs to the IPP isomerase type 2 family. In terms of assembly, homooctamer. Dimer of tetramers. FMN is required as a cofactor. Requires NADPH as cofactor. Mg(2+) serves as cofactor.

The protein localises to the cytoplasm. It catalyses the reaction isopentenyl diphosphate = dimethylallyl diphosphate. Functionally, involved in the biosynthesis of isoprenoids. Catalyzes the 1,3-allylic rearrangement of the homoallylic substrate isopentenyl (IPP) to its allylic isomer, dimethylallyl diphosphate (DMAPP). In Bacillus subtilis (strain 168), this protein is Isopentenyl-diphosphate delta-isomerase.